The chain runs to 427 residues: Probable fatty acid methyltransferase Rv3720 (427 aa).

Residues 167-168 (YT), 202-210 (LLDVGCGWG), and 227-232 (TLSAEQ) contribute to the S-adenosyl-L-methionine site.

Belongs to the CFA/CMAS family.

May be a S-adenosylmethionine-dependent methyltransferase involved in fatty acid metabolism. The protein is Probable fatty acid methyltransferase Rv3720 of Mycobacterium tuberculosis (strain ATCC 25618 / H37Rv).